Reading from the N-terminus, the 404-residue chain is Acyl-[acyl-carrier-protein] desaturase 7, chloroplastic (404 aa).

The transit peptide at 1–39 directs the protein to the chloroplast; sequence MAASATTSTLAVTMFGYPNRNCHLKPPATATLRFWRSAA. Fe cation contacts are provided by Glu-138, Glu-176, His-179, Glu-229, Glu-262, and His-265.

This sequence belongs to the fatty acid desaturase type 2 family. As to quaternary structure, homodimer. Fe(2+) serves as cofactor.

The protein resides in the plastid. Its subcellular location is the chloroplast. It participates in lipid metabolism; fatty acid metabolism. Introduces a cis double bond in the acyl chain of an acyl-[acyl-carrier protein]. The chain is Acyl-[acyl-carrier-protein] desaturase 7, chloroplastic from Oryza sativa subsp. indica (Rice).